We begin with the raw amino-acid sequence, 129 residues long: Endocuticle structural glycoprotein SgAbd-9 (129 aa).

Pyrrolidone carboxylic acid is present on Gln1. A Chitin-binding type R&amp;R domain is found at 28–98 (DGSYTFSYES…VGNVVAPAIS (71 aa)). Thr120 is a glycosylation site (O-linked (HexNAc...) threonine).

Functionally, component of the abdominal endocuticle. This Schistocerca gregaria (Desert locust) protein is Endocuticle structural glycoprotein SgAbd-9.